A 989-amino-acid chain; its full sequence is Mediator of RNA polymerase II transcription subunit 24 (989 aa).

Short sequence motifs (LXXLL motif) lie at residues 128-132 (LHWLL), 344-348 (LTPLL), 448-452 (LDLLL), 557-561 (LVALL), 788-792 (LPGLL), and 857-861 (LMRLL). 2 positions are modified to phosphoserine: Ser862 and Ser873.

The protein belongs to the Mediator complex subunit 24 family. In terms of assembly, component of the Mediator complex, which is composed of MED1, MED4, MED6, MED7, MED8, MED9, MED10, MED11, MED12, MED13, MED13L, MED14, MED15, MED16, MED17, MED18, MED19, MED20, MED21, MED22, MED23, MED24, MED25, MED26, MED27, MED29, MED30, MED31, CCNC, CDK8 and CDC2L6/CDK11. The MED12, MED13, CCNC and CDK8 subunits form a distinct module termed the CDK8 module. Mediator containing the CDK8 module is less active than Mediator lacking this module in supporting transcriptional activation. Individual preparations of the Mediator complex lacking one or more distinct subunits have been variously termed ARC, CRSP, DRIP, PC2, SMCC and TRAP. Interacts with AR. In terms of tissue distribution, ubiquitous. Abundant in skeletal muscle, heart and placenta.

It is found in the nucleus. Component of the Mediator complex, a coactivator involved in the regulated transcription of nearly all RNA polymerase II-dependent genes. Mediator functions as a bridge to convey information from gene-specific regulatory proteins to the basal RNA polymerase II transcription machinery. Mediator is recruited to promoters by direct interactions with regulatory proteins and serves as a scaffold for the assembly of a functional preinitiation complex with RNA polymerase II and the general transcription factors. The sequence is that of Mediator of RNA polymerase II transcription subunit 24 (MED24) from Homo sapiens (Human).